A 680-amino-acid chain; its full sequence is DNA-directed RNA polymerase subunit beta' (680 aa).

Cys69, Cys71, Cys87, and Cys90 together coordinate Zn(2+). 3 residues coordinate Mg(2+): Asp489, Asp491, and Asp493.

Belongs to the RNA polymerase beta' chain family. RpoC1 subfamily. In plastids the minimal PEP RNA polymerase catalytic core is composed of four subunits: alpha, beta, beta', and beta''. When a (nuclear-encoded) sigma factor is associated with the core the holoenzyme is formed, which can initiate transcription. Requires Mg(2+) as cofactor. It depends on Zn(2+) as a cofactor.

It localises to the plastid. It is found in the chloroplast. The enzyme catalyses RNA(n) + a ribonucleoside 5'-triphosphate = RNA(n+1) + diphosphate. Functionally, DNA-dependent RNA polymerase catalyzes the transcription of DNA into RNA using the four ribonucleoside triphosphates as substrates. This is DNA-directed RNA polymerase subunit beta' from Ceratophyllum demersum (Rigid hornwort).